We begin with the raw amino-acid sequence, 422 residues long: p-hydroxyphenylacetate 3-hydroxylase, oxygenase component (422 aa).

Tryptophan 112 contributes to the FMN binding site. Histidine 120 and serine 146 together coordinate substrate. Residues 146–148 (SSI) and 169–171 (WSS) contribute to the FMN site. 263-266 (RPYF) provides a ligand contact to substrate. FMN is bound by residues arginine 292, tyrosine 296, 374 to 375 (AT), and 396 to 397 (HA). Tyrosine 296 serves as a coordination point for substrate.

Belongs to the HpaH/HsaA monooxygenase family. In terms of assembly, homotetramer. The p-hydroxyphenylacetate 3-hydroxylase (HpaH) is composed of an oxygenase component C2 and a reductase component C1.

It carries out the reaction 4-hydroxyphenylacetate + FMNH2 + O2 = 3,4-dihydroxyphenylacetate + FMN + H2O + H(+). The enzyme catalyses 4-hydroxyphenylacetate + FADH2 + O2 = 3,4-dihydroxyphenylacetate + FAD + H2O + H(+). It participates in aromatic compound metabolism; 4-hydroxyphenylacetate degradation; pyruvate and succinate semialdehyde from 4-hydroxyphenylacetate: step 1/7. Inhibited by flavin concentrations greater than 15 uM. Also inhibited by excess p-hydroxyphenylacetate (HPA). Oxygenase component of a two-component system that utilizes reduced FMN (FMNH2) supplied by the reductase component to catalyze the hydroxylation of 4-hydroxyphenylacetic acid, leading to the production of 3,4-dihydroxyphenylacetate (3,4-DHPA). Also utilizes other reduced flavins such as FADH2 and reduced riboflavin to a lesser extent. Only the compounds with a hydroxyl group in the para (p-) position can be hydroxylated. May also oxidize phenol to catechol, and hydroxylate other phenol derivatives. This chain is p-hydroxyphenylacetate 3-hydroxylase, oxygenase component, found in Acinetobacter baumannii.